The primary structure comprises 493 residues: Cobyric acid synthase (493 aa).

Positions 246–440 (PIDIAVIKMP…IHGVFDGVVF (195 aa)) constitute a GATase cobBQ-type domain. Catalysis depends on cysteine 326, which acts as the Nucleophile. Residue histidine 432 is part of the active site.

This sequence belongs to the CobB/CobQ family. CobQ subfamily.

Its pathway is cofactor biosynthesis; adenosylcobalamin biosynthesis. Catalyzes amidations at positions B, D, E, and G on adenosylcobyrinic A,C-diamide. NH(2) groups are provided by glutamine, and one molecule of ATP is hydrogenolyzed for each amidation. This chain is Cobyric acid synthase, found in Clostridium botulinum (strain ATCC 19397 / Type A).